The chain runs to 379 residues: Chaperone protein DnaJ (379 aa).

In terms of domain architecture, J spans 7–72; the sequence is CYYETLEVDR…DKRAAYDRYG (66 aa). A CR-type zinc finger spans residues 135 to 213; it reads GKTAQIEIPV…CSGAGRIERE (79 aa). The Zn(2+) site is built by cysteine 148, cysteine 151, cysteine 165, cysteine 168, cysteine 187, cysteine 190, cysteine 201, and cysteine 204. 4 CXXCXGXG motif repeats span residues 148–155, 165–172, 187–194, and 201–208; these read CESCSGTG, CSMCGGAG, CPGCQGRG, and CPACSGAG.

It belongs to the DnaJ family. Homodimer. Zn(2+) is required as a cofactor.

Its subcellular location is the cytoplasm. Participates actively in the response to hyperosmotic and heat shock by preventing the aggregation of stress-denatured proteins and by disaggregating proteins, also in an autonomous, DnaK-independent fashion. Unfolded proteins bind initially to DnaJ; upon interaction with the DnaJ-bound protein, DnaK hydrolyzes its bound ATP, resulting in the formation of a stable complex. GrpE releases ADP from DnaK; ATP binding to DnaK triggers the release of the substrate protein, thus completing the reaction cycle. Several rounds of ATP-dependent interactions between DnaJ, DnaK and GrpE are required for fully efficient folding. Also involved, together with DnaK and GrpE, in the DNA replication of plasmids through activation of initiation proteins. This Rhodopseudomonas palustris (strain BisB18) protein is Chaperone protein DnaJ.